The chain runs to 421 residues: Gamma-glutamyl phosphate reductase (421 aa).

The protein belongs to the gamma-glutamyl phosphate reductase family.

Its subcellular location is the cytoplasm. It catalyses the reaction L-glutamate 5-semialdehyde + phosphate + NADP(+) = L-glutamyl 5-phosphate + NADPH + H(+). It functions in the pathway amino-acid biosynthesis; L-proline biosynthesis; L-glutamate 5-semialdehyde from L-glutamate: step 2/2. Functionally, catalyzes the NADPH-dependent reduction of L-glutamate 5-phosphate into L-glutamate 5-semialdehyde and phosphate. The product spontaneously undergoes cyclization to form 1-pyrroline-5-carboxylate. The chain is Gamma-glutamyl phosphate reductase from Leptospira biflexa serovar Patoc (strain Patoc 1 / ATCC 23582 / Paris).